Reading from the N-terminus, the 1020-residue chain is Sodium/potassium-transporting ATPase subunit alpha-2 (1020 aa).

The propeptide occupies 1–5 (MGRGA). A disordered region spans residues 1–31 (MGRGAGREYSPAATTAENGGGKKKQKEKELD). The Cytoplasmic segment spans residues 6-85 (GREYSPAATT…NALTPPPTTP (80 aa)). Serine 10 is subject to Phosphoserine. The tract at residues 80 to 82 (PPP) is interaction with phosphoinositide-3 kinase. The chain crosses the membrane as a helical span at residues 86–106 (EWVKFCRQLFGGFSILLWIGA). Residues 107-129 (ILCFLAYGIQAAMEDEPSNDNLY) are Extracellular-facing. A helical membrane pass occupies residues 130-150 (LGVVLAAVVIVTGCFSYYQEA). Residues 151–286 (KSSKIMDSFK…VGRTPIAMEI (136 aa)) lie on the Cytoplasmic side of the membrane. A compositionally biased stretch (polar residues) spans 212–227 (DNSSLTGESEPQTRSP). The segment at 212-231 (DNSSLTGESEPQTRSPEFTH) is disordered. A helical membrane pass occupies residues 287-306 (EHFIQLITGVAVFLGVSFFV). Residues 307–318 (LSLILGYSWLEA) lie on the Extracellular side of the membrane. Residues 319–336 (VIFLIGIIVANVPEGLLA) traverse the membrane as a helical segment. Topologically, residues 337 to 769 (TVTVCLTLTA…EEGRLIFDNL (433 aa)) are cytoplasmic. The active-site 4-aspartylphosphate intermediate is aspartate 374. Serine 439, serine 450, and serine 559 each carry phosphoserine. Threonine 570 is modified (phosphothreonine). 2 positions are modified to phosphoserine: serine 587 and serine 672. The Mg(2+) site is built by aspartate 714 and aspartate 718. A helical transmembrane segment spans residues 770–789 (KKSIAYTLTSNIPEITPFLL). At 790–799 (FIIANIPLPL) the chain is on the extracellular side. Residues 800–820 (GTVTILCIDLGTDMVPAISLA) form a helical membrane-spanning segment. Over 821–840 (YEAAESDIMKRQPRNPQTDK) the chain is Cytoplasmic. At serine 826 the chain carries Phosphoserine. Residues 841–863 (LVNERLISMAYGQIGMIQALGGF) form a helical membrane-spanning segment. The Extracellular segment spans residues 864 to 915 (FTYFVILAENGFLPSRLLGIRLDWDDRSMNDLEDSYGQEWTYEQRKVVEFTC). Residues 916–935 (HTAFFASIVVVQWADLIICK) traverse the membrane as a helical segment. Topologically, residues 936–948 (TRRNSVFQQGMKN) are cytoplasmic. Serine 940 is subject to Phosphoserine; by PKA. The chain crosses the membrane as a helical span at residues 949–967 (KILIFGLLEETALAAFLSY). The Extracellular segment spans residues 968-982 (CPGMGVALRMYPLKV). A helical membrane pass occupies residues 983 to 1003 (TWWFCAFPYSLLIFIYDEVRK). At 1004–1020 (LILRRYPGGWVEKETYY) the chain is on the cytoplasmic side.

Belongs to the cation transport ATPase (P-type) (TC 3.A.3) family. Type IIC subfamily. The sodium/potassium-transporting ATPase is composed of a catalytic alpha subunit, an auxiliary non-catalytic beta subunit and an additional regulatory subunit. Interacts with regulatory subunit FXYD1.

It is found in the membrane. The protein localises to the cell membrane. It catalyses the reaction K(+)(out) + Na(+)(in) + ATP + H2O = K(+)(in) + Na(+)(out) + ADP + phosphate + H(+). Functionally, this is the catalytic component of the active enzyme, which catalyzes the hydrolysis of ATP coupled with the exchange of sodium and potassium ions across the plasma membrane. This action creates the electrochemical gradient of sodium and potassium, providing the energy for active transport of various nutrients. The sequence is that of Sodium/potassium-transporting ATPase subunit alpha-2 (ATP1A2) from Sus scrofa (Pig).